Consider the following 104-residue polypeptide: Large ribosomal subunit protein uL24 (104 aa).

Belongs to the universal ribosomal protein uL24 family. As to quaternary structure, part of the 50S ribosomal subunit.

One of two assembly initiator proteins, it binds directly to the 5'-end of the 23S rRNA, where it nucleates assembly of the 50S subunit. In terms of biological role, one of the proteins that surrounds the polypeptide exit tunnel on the outside of the subunit. The sequence is that of Large ribosomal subunit protein uL24 from Corynebacterium jeikeium (strain K411).